The primary structure comprises 435 residues: GPI-anchor transamidase component PIGU (435 aa).

At 2 to 3 the chain is on the cytoplasmic side; that stretch reads AA. The chain crosses the membrane as a helical span at residues 4–22; sequence PLVLVLVVAVTVRAALFRS. The Lumenal portion of the chain corresponds to 23–78; it reads SLAEFISERVEVVSPLSSWKRVVEGLSLLDLGVSPYSGAVFHETPLIIYLFHFLID. A helical membrane pass occupies residues 79–99; the sequence is YAELVFMITDALTAIALYFAI. Residues 100-136 are Cytoplasmic-facing; sequence QDFNKVVFKKQKLLLELDQYAPDVAELIRTPMEMRYI. 4 helical membrane-spanning segments follow: residues 137-158, 159-178, 179-194, and 195-205; these read PLKV…VAKS, TCAI…IKGS, AFLS…YQSL, and YPLTLFVPGLL. Residues 206–222 lie on the Cytoplasmic side of the membrane; it reads YLLQRQYIPVKMKSKAF. A cardiolipin is bound by residues K216 and M217. The helical transmembrane segment at 223 to 244 threads the bilayer; that stretch reads WIFSWEYAMMYVGSLVVIICLS. Over 245–286 the chain is Lumenal; the sequence is FFLLSSWDFIPAVYGFILSVPDLTPNIGLFWYFFAEMFEHFS. The chain crosses the membrane as a helical span at residues 287 to 306; sequence LFFVCVFQINVFFYTIPLAI. Residues 307–311 are Cytoplasmic-facing; the sequence is KLKEH. A cardiolipin is bound at residue K309. A run of 2 helical transmembrane segments spans residues 312–331 and 332–345; these read PIFF…SYPT and VGDV…FPVW. At 346 to 354 the chain is on the cytoplasmic side; it reads NHLYRFLRN. The chain crosses the membrane as a helical span at residues 355-372; it reads IFVLTCIIIVCSLLFPVL. Residues 373 to 384 lie on the Lumenal side of the membrane; sequence WHLWIYAGSANS. A 2-acyl-6-[6-phosphoethanolamine-alpha-D-mannosyl-(1-&gt;2)-6-phosphoethanolamine-alpha-D-mannosyl-(1-&gt;6)-2-phosphoethanolamine-alpha-D-mannosyl-(1-&gt;4)-alpha-D-glucosaminyl]-1-(1-radyl,2-acyl-sn-glycero-3-phospho)-1D-myo-inositol contacts are provided by N383 and N385. A helical membrane pass occupies residues 385 to 406; sequence NFFYAITLTFNVGQILLISDYF. Topologically, residues 407-435 are cytoplasmic; sequence YAFLRREYYLTHGLYLTAKDGTEAMLVLK.

It belongs to the PIGU family. In terms of assembly, heteropentamer. Part of the GPI-anchor transamidase complex, consisting of PIGK, PIGT, PIGS, PIGU and GAA1.

It localises to the endoplasmic reticulum membrane. The protein operates within glycolipid biosynthesis; glycosylphosphatidylinositol-anchor biosynthesis. Its function is as follows. Component of the glycosylphosphatidylinositol-anchor (GPI-anchor) transamidase (GPI-T) complex that catalyzes the formation of the linkage between a proprotein and a GPI-anchor and participates in GPI anchored protein biosynthesis. Binds the lipid portion of GPI-anchor. May act as an organizer in the transmembrane layer to recruit other subunits, and thus is essential for assembly of the complex. In Homo sapiens (Human), this protein is GPI-anchor transamidase component PIGU.